A 299-amino-acid chain; its full sequence is ATP phosphoribosyltransferase (299 aa).

Belongs to the ATP phosphoribosyltransferase family. Long subfamily. The cofactor is Mg(2+).

The protein resides in the cytoplasm. It carries out the reaction 1-(5-phospho-beta-D-ribosyl)-ATP + diphosphate = 5-phospho-alpha-D-ribose 1-diphosphate + ATP. It participates in amino-acid biosynthesis; L-histidine biosynthesis; L-histidine from 5-phospho-alpha-D-ribose 1-diphosphate: step 1/9. Feedback inhibited by histidine. Its function is as follows. Catalyzes the condensation of ATP and 5-phosphoribose 1-diphosphate to form N'-(5'-phosphoribosyl)-ATP (PR-ATP). Has a crucial role in the pathway because the rate of histidine biosynthesis seems to be controlled primarily by regulation of HisG enzymatic activity. The polypeptide is ATP phosphoribosyltransferase (Shewanella frigidimarina (strain NCIMB 400)).